A 420-amino-acid chain; its full sequence is O-methyltransferase penK (420 aa).

Asp-285 contributes to the S-adenosyl-L-methionine binding site. His-325 serves as the catalytic Proton acceptor.

It belongs to the class I-like SAM-binding methyltransferase superfamily. Cation-independent O-methyltransferase family.

Its pathway is secondary metabolite biosynthesis. The protein operates within alkaloid biosynthesis. It participates in mycotoxin biosynthesis. In terms of biological role, O-methyltransferase; part of the gene cluster that mediates the biosynthesis of penigequinolones, potent insecticidal alkaloids that contain a highly modified 10-carbon prenyl group. The first stage is catalyzed by the nonribosomal peptide synthetase penN that condenses anthranilic acid and O-methyl-L-tyrosine to produce 4'-methoxycyclopeptin. 4'-methoxycyclopeptin is then converted to 4'-methoxydehydrocyclopeptin by the ketoglutarate-dependent dioxygenase penM through dehydrogenation to form a double bond between C-alpha and C-beta of the O-methyltyrosine side chain. PenM also converts its first product methoxydehydrocyclopeptin to 4'-methoxycyclopenin. The following conversion of 4'methoxycyclopenin into 4'-methoxyviridicatin is catalyzed by the cyclopenase penL. 4'-methoxyviridicatin is the precursor of quinolone natural products, and is further converted to quinolinone B. The prenyltransferase penI then catalyzes the canonical Friedel-Crafts alkylation of quinolinone B with dimethylallyl cation to yield dimethylallyl quinolone, which is subjected to FAD-dependent dehydrogenation by the FAD-linked oxidoreductase penH to yield conjugated aryl diene. The delta(3') double bond then serves as the site of the second alkylation with DMAPP catalyzed by the prenyltransferase penG to yield a carbenium ion intermediate, which can be attacked by H(2)O to yield a styrenyl quinolone containing a C3'-hydroxyprenyl chain, or undergo cyclization to yield yaequinolones J1 and J2. The conversion of the styrenyl quinolone into the tetrahydrofuran-containing yaequinolone C is performed by the FAD-dependent monooxygenase penE and involves epoxidation of the terminal C7'-C8' olefin, followed by epoxide ring opening initiated by the C3' hydroxyl group. The predicted cysteine hydrolase penJ acts as an epoxide hydrolase that enhances the rate of the 5-exo-tet cyclization step, increasing the yield of yaequinolone C. PenF catalyzes the cationic rearrangement of the epoxide formed by penE (before ring opening to produce yaequinolone C) into yaequinolone D. Finally, the short-chain dehydrogenase/reductase (SDR)-like reductase penD, catalyzes both the dehydration of yaequinolone D and the reduction of the resulting oxonium to yield penigequinolone. The chain is O-methyltransferase penK from Penicillium thymicola.